The primary structure comprises 354 residues: Rhodopsin (354 aa).

Residues 1–36 (MNGTEGPYFYVPMVNTTGIVRSPYEYPQYYLVSPAA) are Extracellular-facing. N2 and N15 each carry an N-linked (GlcNAc...) asparagine glycan. Residues 37 to 61 (YACLGAYMFFLILVGFPVNFLTLYV) traverse the membrane as a helical segment. At 62 to 73 (TIEHKKLRTPLN) the chain is on the cytoplasmic side. A helical transmembrane segment spans residues 74–96 (YILLNLAVADLFMVFGGFTTTIY). Over 97–110 (TSMHGYFVLGRLGC) the chain is Extracellular. C110 and C187 form a disulfide bridge. The chain crosses the membrane as a helical span at residues 111-133 (NLEGYFATLGGEIGLWSLVVLAV). The 'Ionic lock' involved in activated form stabilization signature appears at 134 to 136 (ERW). Over 134 to 152 (ERWLVVCKPISNFRFTENH) the chain is Cytoplasmic. A helical transmembrane segment spans residues 153–173 (AIMGLVFTWIMANACAAPPLL). Residues 174 to 202 (GWSRYIPEGMQCSCGVDYYTRAEGFNNES) lie on the Extracellular side of the membrane. The chain crosses the membrane as a helical span at residues 203-224 (FVIYMFICHFCIPLVVVFFCYG). Residues 225 to 252 (RLLCAVKEAAAAQQESETTQRAEREVTR) lie on the Cytoplasmic side of the membrane. A helical membrane pass occupies residues 253–274 (MVVILVIGFLVCWTPYASVAWY). Residues 275–286 (IFSNQGSEFGPL) are Extracellular-facing. The helical transmembrane segment at 287–308 (FMTIPAFFAKSSSIYNPMIYIC) threads the bilayer. An N6-(retinylidene)lysine modification is found at K296. Residues 309 to 354 (MNKQFRHCMITTLCCGKNPFEEEEGASTTASKTEASSVSSSSVSPA) lie on the Cytoplasmic side of the membrane. 2 S-palmitoyl cysteine lipidation sites follow: C322 and C323. Positions 333–354 (GASTTASKTEASSVSSSSVSPA) are disordered. Over residues 334–354 (ASTTASKTEASSVSSSSVSPA) the composition is skewed to low complexity.

The protein belongs to the G-protein coupled receptor 1 family. Opsin subfamily. In terms of processing, phosphorylated on some or all of the serine and threonine residues present in the C-terminal region. Contains one covalently linked retinal chromophore.

It localises to the membrane. The protein localises to the cell projection. It is found in the cilium. The protein resides in the photoreceptor outer segment. Its function is as follows. Photoreceptor required for image-forming vision at low light intensity. While most salt water fish species use retinal as chromophore, most freshwater fish use 3-dehydroretinal, or a mixture of retinal and 3-dehydroretinal. Light-induced isomerization of 11-cis to all-trans retinal triggers a conformational change that activates signaling via G-proteins. Subsequent receptor phosphorylation mediates displacement of the bound G-protein alpha subunit by arrestin and terminates signaling. The sequence is that of Rhodopsin (rho) from Gambusia affinis (Western mosquitofish).